An 871-amino-acid chain; its full sequence is Metabotropic glutamate receptor 6 (871 aa).

An N-terminal signal peptide occupies residues 1-23 (MGRLRVLLLWLAWWLSQAGIAHG). Topologically, residues 24–579 (AGSVRLAGGL…VVRLTWSSPW (556 aa)) are extracellular. The cysteines at positions 51 and 93 are disulfide-linked. L-glutamate is bound by residues S148, 169–171 (AST), and Y219. 7 disulfides stabilise this stretch: C238–C530, C361–C377, C417–C424, C512–C531, C516–C534, C537–C549, and C552–C565. N-linked (GlcNAc...) asparagine glycosylation occurs at N290. Residue D301 coordinates L-glutamate. K394 lines the L-glutamate pocket. N445 and N473 each carry an N-linked (GlcNAc...) asparagine glycan. N-linked (GlcNAc...) asparagine glycosylation occurs at N561. Residues 580–602 (AALPLLLAVLGIMATTTIIATFM) form a helical membrane-spanning segment. The Cytoplasmic segment spans residues 603–616 (RHNDTPIVRASGRE). Residues 617-637 (LSYVLLTGIFLIYAITFLMVA) traverse the membrane as a helical segment. Residues 638–648 (EPCAAVCASRR) are Extracellular-facing. The chain crosses the membrane as a helical span at residues 649–667 (LLLGLGTTLSYSALLTKTN). At 668–691 (RIYRIFEQGKRSVTPPPFISPTSQ) the chain is on the cytoplasmic side. Residues 692-712 (LVITFGLTSLQVVGVIAWLGA) form a helical membrane-spanning segment. Topologically, residues 713-742 (QPPHSVIDYEEQRTVDPEQARGVLKCDMSD) are extracellular. The helical transmembrane segment at 743–764 (LSLIGCLGYSLLLMVTCTVYAI) threads the bilayer. Topologically, residues 765–777 (KARGVPETFNEAK) are cytoplasmic. A helical membrane pass occupies residues 778–800 (PIGFTMYTTCIIWLAFVPIFFGT). Residues 801-813 (AQSAEKIYIQTTT) lie on the Extracellular side of the membrane. Residues 814 to 839 (LTVSLSLSASVSLGMLYVPKTYVILF) form a helical membrane-spanning segment. The Cytoplasmic segment spans residues 840 to 871 (HPEQNVQKRKRSLKKTSTMAAPPKSENSEDAK). The tract at residues 848 to 871 (RKRSLKKTSTMAAPPKSENSEDAK) is disordered.

Belongs to the G-protein coupled receptor 3 family. As to quaternary structure, homodimer. Interacts with GPR179. Interacts with photoreceptor synaptic protein LRIT1 (via its N-terminal extracellular domain). As to expression, detected in the outer plexiform layer in retina (at protein level).

The protein resides in the cell membrane. Its subcellular location is the endoplasmic reticulum membrane. It is found in the golgi apparatus membrane. It localises to the cell projection. The protein localises to the dendrite. In terms of biological role, G-protein coupled receptor for glutamate. Ligand binding causes a conformation change that triggers signaling via guanine nucleotide-binding proteins (G proteins) and modulates the activity of down-stream effectors, such as adenylate cyclase. Signaling inhibits adenylate cyclase activity. Signaling stimulates TRPM1 channel activity and Ca(2+) uptake. Required for normal vision. This Mus musculus (Mouse) protein is Metabotropic glutamate receptor 6 (Grm6).